A 1366-amino-acid chain; its full sequence is Collagen alpha-2(I) chain (1366 aa).

The N-terminal stretch at 1–22 (MLSFVDTRTLLLLAVTSCLATC) is a signal peptide. A Pyrrolidone carboxylic acid modification is found at Gln23. A propeptide spans 23–79 (QSLQEATARKGPTGDRGPRGERGPPGPPGRDGDDGIPGPPGPPGPPGPPGLGGNFAA) (N-terminal propeptide). The segment at 27–1131 (EATARKGPTG…PRSPPSLRPK (1105 aa)) is disordered. Over residues 34–44 (PTGDRGPRGER) the composition is skewed to basic and acidic residues. A compositionally biased stretch (pro residues) spans 59-71 (PGPPGPPGPPGPP). Lys84 carries the post-translational modification Allysine. Residues 84 to 94 (KGVGLGPGPMG) are compositionally biased toward gly residues. Over residues 95–132 (LMGPRGPPGASGAPGPQGFQGPAGEPGEPGQTGPAGAR) the composition is skewed to low complexity. A compositionally biased stretch (basic and acidic residues) spans 141–155 (AGEDGHPGKPGRPGE). Lys177 carries the post-translational modification 5-hydroxylysine; alternate. An O-linked (Gal...) hydroxylysine; alternate glycan is attached at Lys177. 8 stretches are compositionally biased toward low complexity: residues 225-254 (VGAP…SAGP), 279-293 (AGPR…VSGP), 300-321 (PGAN…AGAP), 330-345 (PGPV…RGIV), 384-408 (NGEA…RGLP), 423-434 (RGATGPAGVRGP), 470-489 (LPGI…RGEP), and 513-531 (AGLA…NGAQ). The span at 538–547 (GVQGGKGEQG) shows a compositional bias: gly residues. Positions 594 to 611 (PGESGAAGPSGPIGSRGP) are enriched in low complexity. Positions 634 to 643 (GASGPGGLPG) are enriched in gly residues. Low complexity-rich tracts occupy residues 668–690 (NPGR…AGAT) and 717–737 (VGPA…QPGA). Basic and acidic residues predominate over residues 738–747 (KGERGTKGPK). Low complexity predominate over residues 756 to 765 (TGPIGSAGPS). Over residues 775–784 (GSRGDGGPPG) the composition is skewed to gly residues. Composition is skewed to low complexity over residues 785–795 (ATGFPGAAGRT), 863–876 (PQGL…LGLP), 893–932 (EPGP…NPGN), 951–974 (PGNI…PTGK), and 981–1001 (PGPA…PSGP). Residues 1005–1016 (RGDKGEPGEKGP) are compositionally biased toward basic and acidic residues. Over residues 1089–1103 (AGPPGPPGPPGPPGP) the composition is skewed to pro residues. Positions 1120-1366 (DQPRSPPSLR…RVDVGPVCFK (247 aa)) are cleaved as a propeptide — C-terminal propeptide. One can recognise a Fibrillar collagen NC1 domain in the interval 1133–1366 (YEVDATLKSL…RVDVGPVCFK (234 aa)). 3 disulfides stabilise this stretch: Cys1163–Cys1195, Cys1203–Cys1364, and Cys1272–Cys1317. Ca(2+) is bound by residues Asp1181, Asn1183, Gln1184, Cys1186, and Asp1189.

It belongs to the fibrillar collagen family. In terms of assembly, trimers of one alpha 2(I) and two alpha 1(I) chains. Interacts (via C-terminus) with TMEM131 (via PapD-L domain); the interaction is direct and is involved in assembly and TRAPPIII ER-to-Golgi transport complex-dependent secretion of collagen. In terms of processing, prolines at the third position of the tripeptide repeating unit (G-X-Y) are hydroxylated in some or all of the chains. As to expression, forms the fibrils of tendon, ligaments and bones. In bones the fibrils are mineralized with calcium hydroxyapatite.

The protein localises to the secreted. It localises to the extracellular space. The protein resides in the extracellular matrix. Type I collagen is a member of group I collagen (fibrillar forming collagen). This chain is Collagen alpha-2(I) chain (COL1A2), found in Canis lupus familiaris (Dog).